The following is a 67-amino-acid chain: Large ribosomal subunit protein bL35 (67 aa).

It belongs to the bacterial ribosomal protein bL35 family.

This chain is Large ribosomal subunit protein bL35, found in Deinococcus geothermalis (strain DSM 11300 / CIP 105573 / AG-3a).